We begin with the raw amino-acid sequence, 305 residues long: tRNA uridine(34) hydroxylase (305 aa).

A Rhodanese domain is found at 125–219 (ADENTVVVDT…YLEEVPREQS (95 aa)). Catalysis depends on Cys179, which acts as the Cysteine persulfide intermediate.

This sequence belongs to the TrhO family.

It catalyses the reaction uridine(34) in tRNA + AH2 + O2 = 5-hydroxyuridine(34) in tRNA + A + H2O. In terms of biological role, catalyzes oxygen-dependent 5-hydroxyuridine (ho5U) modification at position 34 in tRNAs. The chain is tRNA uridine(34) hydroxylase from Brucella suis (strain ATCC 23445 / NCTC 10510).